Consider the following 1080-residue polypeptide: AP-4 complex subunit epsilon (1080 aa).

HEAT repeat units lie at residues 161-198 (DTIP…LVGD), 201-238 (LDDD…KHST), 369-405 (QLIE…KVSP), 406-443 (KLVL…QTNV), and 445-479 (PVCS…KYSP). Disordered regions lie at residues 711-782 (TPLV…FPQQ), 801-920 (NNNS…NIDP), 933-973 (FSEN…INNN), and 996-1027 (TNNS…NNNL). Composition is skewed to low complexity over residues 762–782 (QQQQ…FPQQ), 801–847 (NNNS…PNNQ), 878–911 (NKQT…IQKH), 936–952 (NNNR…NQNN), and 962–972 (KKSNNENNINN).

The protein belongs to the adaptor complexes large subunit family. As to quaternary structure, may be part of the adaptor protein complex 4 (AP-4), a heterotetramer composed of two large adaptins (epsilon-type subunitand beta-type subunit), a medium adaptin (mu-type subunit) and a small adaptin (sigma-type).

It localises to the golgi apparatus. Its subcellular location is the trans-Golgi network membrane. In terms of biological role, probable component of an adaptor protein complex. Adaptor protein complexes are vesicle coat components involved both in vesicle formation and cargo selection. They control the vesicular transport of proteins in different trafficking pathways. The sequence is that of AP-4 complex subunit epsilon from Dictyostelium discoideum (Social amoeba).